The sequence spans 234 residues: Probable plastid-lipid-associated protein 5, chloroplastic (234 aa).

A chloroplast-targeting transit peptide spans 1–45 (MALPWCLKTGVLTSPAAGFNHPSDSGFAVPTKLLSIRKGDRERLR).

It belongs to the PAP/fibrillin family.

It is found in the plastid. The protein localises to the chloroplast thylakoid. In Arabidopsis thaliana (Mouse-ear cress), this protein is Probable plastid-lipid-associated protein 5, chloroplastic (PAP5).